A 72-amino-acid chain; its full sequence is Antimicrobial peptide MeuNaTxbeta-4 (72 aa).

The first 5 residues, 1–5 (LIGVK), serve as a signal peptide directing secretion. Positions 7 to 69 (EHGYLLDKYT…LWHYETNKCN (63 aa)) constitute an LCN-type CS-alpha/beta domain. 4 disulfides stabilise this stretch: Cys-18–Cys-68, Cys-22–Cys-43, Cys-29–Cys-50, and Cys-33–Cys-52.

As to expression, expressed by the venom gland.

The protein localises to the secreted. In terms of biological role, antimicrobial peptide with weak activity against both Gram-positive and -negative bacteria. Its antibiotic activity is potentiated by other antibacterial peptides such as Meucin-49. The chain is Antimicrobial peptide MeuNaTxbeta-4 from Mesobuthus eupeus (Lesser Asian scorpion).